The sequence spans 508 residues: Mitochondrial distribution and morphology protein 10 (508 aa).

The segment at 160 to 195 is disordered; the sequence is PAHPTSTRPTPPQTPPSHTRQPSEPSTPAPSPTPGN.

This sequence belongs to the MDM10 family. As to quaternary structure, component of the ER-mitochondria encounter structure (ERMES) or MDM complex, composed of MMM1, MDM10, MDM12 and MDM34. Associates with the mitochondrial outer membrane sorting assembly machinery SAM(core) complex.

The protein resides in the mitochondrion outer membrane. Its function is as follows. Component of the ERMES/MDM complex, which serves as a molecular tether to connect the endoplasmic reticulum and mitochondria. Components of this complex are involved in the control of mitochondrial shape and protein biogenesis and may function in phospholipid exchange. MDM10 is involved in the late assembly steps of the general translocase of the mitochondrial outer membrane (TOM complex). Functions in the TOM40-specific route of the assembly of outer membrane beta-barrel proteins, including the association of TOM40 with the receptor TOM22 and small TOM proteins. Can associate with the SAM(core) complex as well as the MDM12-MMM1 complex, both involved in late steps of the major beta-barrel assembly pathway, that is responsible for biogenesis of all outer membrane beta-barrel proteins. May act as a switch that shuttles between both complexes and channels precursor proteins into the TOM40-specific pathway. Plays a role in mitochondrial morphology and in the inheritance of mitochondria. This Cryptococcus neoformans var. neoformans serotype D (strain JEC21 / ATCC MYA-565) (Filobasidiella neoformans) protein is Mitochondrial distribution and morphology protein 10.